A 233-amino-acid chain; its full sequence is Orotidine 5'-phosphate decarboxylase (233 aa).

Residues Asp10, Lys32, Asp59–Thr68, Thr119, Arg180, Gln189, Gly209, and Arg210 contribute to the substrate site. The Proton donor role is filled by Lys61.

The protein belongs to the OMP decarboxylase family. Type 1 subfamily. As to quaternary structure, homodimer.

It carries out the reaction orotidine 5'-phosphate + H(+) = UMP + CO2. It participates in pyrimidine metabolism; UMP biosynthesis via de novo pathway; UMP from orotate: step 2/2. Its function is as follows. Catalyzes the decarboxylation of orotidine 5'-monophosphate (OMP) to uridine 5'-monophosphate (UMP). This is Orotidine 5'-phosphate decarboxylase from Pasteurella multocida (strain Pm70).